Reading from the N-terminus, the 479-residue chain is G-rich sequence factor 1 (479 aa).

Residues 1–116 (MAGTRWVLGA…AAAAGPARGY (116 aa)) constitute a mitochondrion transit peptide. 2 RRM domains span residues 149-245 (YLIR…PSPV) and 249-325 (GVVR…PSRR). Residue S243 is modified to Phosphoserine. A Phosphoserine modification is found at S334. An RRM 3 domain is found at 400–479 (HFVHMRGLPF…LFLNSCPKGK (80 aa)).

In terms of assembly, monomer. Found in a complex with DDX28, DHX30, FASTKD2 and FASTKD5. Interacts with the mitochondrial RNase P complex subunit TRMT10C/MRPP1. Interacts with the 2 components of the mitochondrial degradosome complex, PNPT1 and SUPV3L1, in an RNA-dependent manner.

The protein resides in the mitochondrion matrix. Functionally, regulator of post-transcriptional mitochondrial gene expression, required for assembly of the mitochondrial ribosome and for recruitment of mRNA and lncRNA. Binds RNAs containing the 14 base G-rich element. Preferentially binds RNAs transcribed from three contiguous genes on the light strand of mtDNA, the ND6 mRNA, and the long non-coding RNAs for MT-CYB and MT-ND5, each of which contains multiple consensus binding sequences. Involved in the degradosome-mediated decay of non-coding mitochondrial transcripts (MT-ncRNA) and tRNA-like molecules. Acts by unwinding G-quadruplex RNA structures in MT-ncRNA, thus facilitating their degradation by the degradosome. G-quadruplexes (G4) are non-canonical 4 stranded structures formed by transcripts from the light strand of mtDNA. The sequence is that of G-rich sequence factor 1 (Grsf1) from Mus musculus (Mouse).